The sequence spans 533 residues: MPLNAVIFTLLLRCSICLGKFPFYTIPDKLGPWSPIDIHHLSCPNNLVVEDEGCTTLTPFSYMELKVGYITSIKVSGFTCTGVVTEAETYTNFVGYVTTTFRRRHFRPSVNSCRDAYNWKIAGDPRYEESLHNPYPDSHWLRTVKTTKESLLIISPSVADMDAYDKKLYSKIVSNGRCSEISPGSPFCPTNHEYTIWMPESSNPGISCDIFTRSMGKKATKDGQLCGFVDERGLYKSLKGACRLRLCGISGLRLMDGSWVSLPQVNNSEWCSPDQLVNIHDFHSDEIEHLVADELVKKREDCLDALETILFTKSISFRRLSHLRKLVPGFGKAYTIINRTLMEAEAHYKSVREWKEIIPSKGCLKAGGRCYPHHNGIFFNGIILGPGGEILIPEMQSALLQQHIELLESSVVPLKHPLADPSTVFKNDDEAESFVDVHLPDTNQKISGIDLGLPEWKRYFLIGVSAVALLALSIIIAVCCKRFRKRKKSKPGPVELTRKVSVISKGNGPVPSWESYKEGTTGDVRNTTPSTRE.

An N-terminal signal peptide occupies residues 1-19 (MPLNAVIFTLLLRCSICLG). The Virion surface portion of the chain corresponds to 20–459 (KFPFYTIPDK…DLGLPEWKRY (440 aa)). Residues 460-480 (FLIGVSAVALLALSIIIAVCC) traverse the membrane as a helical segment. Cys480 carries S-palmitoyl cysteine; by host lipidation. Topologically, residues 481–533 (KRFRKRKKSKPGPVELTRKVSVISKGNGPVPSWESYKEGTTGDVRNTTPSTRE) are intravirion. Positions 492–533 (GPVELTRKVSVISKGNGPVPSWESYKEGTTGDVRNTTPSTRE) are disordered. The segment covering 523-533 (DVRNTTPSTRE) has biased composition (polar residues).

Belongs to the lyssavirus glycoprotein family. Homotrimer. Interacts with matrix protein. Post-translationally, glycosylated and palmitoylated by host. Glycosylation is crucial for glycoprotein export at the cell surface.

The protein resides in the virion membrane. Functionally, attaches the virus to host cellular receptor, inducing endocytosis of the virion. In the endosome, the acidic pH induces conformational changes in the glycoprotein trimer, which trigger fusion between virus and cell membrane. The chain is Glycoprotein (G) from Duvenhage virus (DUVV).